The primary structure comprises 614 residues: MLAGGVRSMPSPLLACWQPILLLVLGSVLSGSATGCPPRCECSAQDRAVLCHRKRFVAVPEGIPTETRLLDLGKNRIKTLNQDEFASFPHLEELELNENIVSAVEPGAFNNLFNLRTLGLRSNRLKLIPLGVFTGLSNLTKLDISENKIVILLDYMFQDLYNLKSLEVGDNDLVYISHRAFSGLNSLEQLTLEKCNLTSIPTEALSHLHGLIVLRLRHLNINAIRDYSFKRLYRLKVLEISHWPYLDTMTPNCLYGLNLTSLSITHCNLTAVPYLAVRHLVYLRFLNLSYNPISTIEGSMLHELLRLQEIQLVGGQLAVVEPYAFRGLNYLRVLNVSGNQLTTLEESVFHSVGNLETLILDSNPLACDCRLLWVFRRRWRLNFNRQQPTCATPEFVQGKEFKDFPDVLLPNYFTCRRARIRDRKAQQVFVDEGHTVQFVCRADGDPPPAILWLSPRKHLVSAKSNGRLTVFPGGTLEVRYAQVQDNGTYLCIAANAGGNDSMPAHLHVRSYSPDWPHQPNKTFAFISNQPGEGEANSTRATVPFPFDIKTLIIATTMGFISFLGVVLFCLVLLFLWSRGKGNTKHNIEIEYVPRKSDAGISSADAPRKFNMKMI.

The N-terminal stretch at 1 to 35 is a signal peptide; that stretch reads MLAGGVRSMPSPLLACWQPILLLVLGSVLSGSATG. 2 disulfide bridges follow: C36/C42 and C40/C51. Residues 36–65 form the LRRNT domain; that stretch reads CPPRCECSAQDRAVLCHRKRFVAVPEGIPT. Over 36 to 555 the chain is Extracellular; sequence CPPRCECSAQ…FDIKTLIIAT (520 aa). LRR repeat units follow at residues 66-87, 90-111, 114-135, 138-159, 162-183, 186-207, 210-231, 258-279, 282-303, 306-327, and 330-351; these read ETRL…EFAS, HLEE…AFNN, NLRT…VFTG, NLTK…MFQD, NLKS…AFSG, SLEQ…ALSH, GLIV…SFKR, NLTS…AVRH, YLRF…MLHE, RLQE…AFRG, and YLRV…VFHS. N-linked (GlcNAc...) asparagine glycosylation is present at N138. An N-linked (GlcNAc...) asparagine glycan is attached at N196. N-linked (GlcNAc...) asparagine glycosylation is found at N258, N268, and N287. N335 carries N-linked (GlcNAc...) asparagine glycosylation. Positions 363–417 constitute an LRRCT domain; that stretch reads NPLACDCRLLWVFRRRWRLNFNRQQPTCATPEFVQGKEFKDFPDVLLPNYFTCRR. Cystine bridges form between C367–C390, C369–C415, and C440–C491. Residues 405 to 507 form the Ig-like C2-type domain; that stretch reads PDVLLPNYFT…GNDSMPAHLH (103 aa). N-linked (GlcNAc...) asparagine glycosylation is found at N486, N499, N520, and N536. Residues 556–576 form a helical membrane-spanning segment; the sequence is TMGFISFLGVVLFCLVLLFLW. The Cytoplasmic portion of the chain corresponds to 577–614; the sequence is SRGKGNTKHNIEIEYVPRKSDAGISSADAPRKFNMKMI. S596 is modified (phosphoserine).

As to quaternary structure, homotetramer. Forms a ternary complex with RTN4R/NGFR and RTN4R/TNFRSF19. Interacts with NGRF, RTN4R and MYT1L. Post-translationally, N-glycosylated. Contains predominantly high-mannose glycans.

It is found in the cell membrane. Functionally, functional component of the Nogo receptor signaling complex (RTN4R/NGFR) in RhoA activation responsible for some inhibition of axonal regeneration by myelin-associated factors. Is also an important negative regulator of oligodentrocyte differentiation and axonal myelination. Acts in conjunction with RTN4 and RTN4R in regulating neuronal precursor cell motility during cortical development. The sequence is that of Leucine-rich repeat and immunoglobulin-like domain-containing nogo receptor-interacting protein 1 (LINGO1) from Pongo abelii (Sumatran orangutan).